The primary structure comprises 100 residues: uncharacterized protein (100 aa).

This is an uncharacterized protein from Bacillus subtilis (strain 168).